A 536-amino-acid polypeptide reads, in one-letter code: Chaperonin GroEL (536 aa).

ATP contacts are provided by residues 29–32 (TLGP), 86–90 (DGTTT), Gly-413, and Asp-494.

This sequence belongs to the chaperonin (HSP60) family. As to quaternary structure, forms a cylinder of 14 subunits composed of two heptameric rings stacked back-to-back. Interacts with the co-chaperonin GroES.

Its subcellular location is the cytoplasm. The enzyme catalyses ATP + H2O + a folded polypeptide = ADP + phosphate + an unfolded polypeptide.. Functionally, together with its co-chaperonin GroES, plays an essential role in assisting protein folding. The GroEL-GroES system forms a nano-cage that allows encapsulation of the non-native substrate proteins and provides a physical environment optimized to promote and accelerate protein folding. The chain is Chaperonin GroEL from Acholeplasma laidlawii (strain PG-8A).